Reading from the N-terminus, the 285-residue chain is Involucrin (285 aa).

3 disordered regions span residues 1 to 93 (MSQQ…QEQK), 120 to 256 (LEQQ…AQVQ), and 266 to 285 (LPLIEQQHQKQEVHDPPEHQ). A compositionally biased stretch (polar residues) spans 27 to 39 (IDTQQEQVKQPTS). Composition is skewed to low complexity over residues 72-87 (EQQCEPQEQEQQQKQQ), 120-129 (LEQQQEQQES), and 137-147 (EQCLEQQQEQQ). Composition is skewed to basic and acidic residues over residues 149-165 (SQEKELHLEQEQQKEEL), 175-185 (EQCEKHQEAKN), and 200-233 (QQKEQLEQEKKLVDQHLDQEPAQRTEQPEKKEEQ). A compositionally biased stretch (low complexity) spans 235 to 248 (LEQQGQQEGQLEQP). A compositionally biased stretch (basic and acidic residues) spans 272-285 (QHQKQEVHDPPEHQ).

The protein belongs to the involucrin family. In terms of assembly, directly or indirectly cross-linked to cornifelin (CNFN). In terms of processing, substrate of transglutaminase. Specific glutamines or lysines are cross-linked to keratins, desmoplakin and to inter involucrin molecules. Keratinocytes of epidermis and other stratified squamous epithelia.

It localises to the cytoplasm. Its function is as follows. Part of the insoluble cornified cell envelope (CE) of stratified squamous epithelia. The chain is Involucrin (IVL) from Canis lupus familiaris (Dog).